Consider the following 366-residue polypeptide: Putative neutrophil cytosol factor 1C (366 aa).

Residues 1–101 (MYMFLVKWQD…DFFKVRPDDL (101 aa)) form the PX domain. SH3 domains are found at residues 132 to 191 (IILQ…PLDS) and 202 to 261 (YAGE…KSGQ). Residues 261 to 366 (QDVSQAQRQI…STKRKLASAV (106 aa)) form a disordered region. S279 and S280 each carry phosphoserine. Residues 285–294 (HSIHQRSRKR) are compositionally biased toward basic residues. Phosphoserine is present on residues S296, S304, S321, and S324.

The protein resides in the cytoplasm. Functionally, may be required for activation of the latent NADPH oxidase (necessary for superoxide production). The sequence is that of Putative neutrophil cytosol factor 1C (NCF1C) from Homo sapiens (Human).